Here is a 249-residue protein sequence, read N- to C-terminus: NADH dehydrogenase [ubiquinone] flavoprotein 2, mitochondrial (249 aa).

The N-terminal 32 residues, 1–32 (MFFSAALRARAAGLTAHWGRHVRNLHKTAKQN), are a transit peptide targeting the mitochondrion. Residue K61 is modified to N6-acetyllysine. 4 residues coordinate [2Fe-2S] cluster: C135, C140, C176, and C180. Y193 bears the Phosphotyrosine; by SRC mark. A disordered region spans residues 213–249 (IPKPGPRSGRFSCEPAGGLTSLTEPPKGPGFGVQAGL).

It belongs to the complex I 24 kDa subunit family. Core subunit of respiratory chain NADH dehydrogenase (Complex I) which is composed of 45 different subunits. This is a component of the flavoprotein-sulfur (FP) fragment of the enzyme. Requires [2Fe-2S] cluster as cofactor.

It is found in the mitochondrion inner membrane. It catalyses the reaction a ubiquinone + NADH + 5 H(+)(in) = a ubiquinol + NAD(+) + 4 H(+)(out). Core subunit of the mitochondrial membrane respiratory chain NADH dehydrogenase (Complex I) which catalyzes electron transfer from NADH through the respiratory chain, using ubiquinone as an electron acceptor. Parts of the peripheral arm of the enzyme, where the electrons from NADH are accepted by flavin mononucleotide (FMN) and then passed along a chain of iron-sulfur clusters by electron tunnelling to the final acceptor ubiquinone. Contains one iron-sulfur cluster. This is NADH dehydrogenase [ubiquinone] flavoprotein 2, mitochondrial from Pan troglodytes (Chimpanzee).